Here is a 293-residue protein sequence, read N- to C-terminus: Glutamyl-Q tRNA(Asp) synthetase (293 aa).

L-glutamate is bound by residues 8-12 (RFAPS) and E44. The 'HIGH' region motif lies at 11 to 21 (PSPSGPLHAGS). Positions 98, 100, 120, and 124 each coordinate Zn(2+). Positions 183 and 201 each coordinate L-glutamate. Positions 239–243 (KLSKQ) match the 'KMSKS' region motif. ATP is bound at residue K242.

Belongs to the class-I aminoacyl-tRNA synthetase family. GluQ subfamily. Requires Zn(2+) as cofactor.

Catalyzes the tRNA-independent activation of glutamate in presence of ATP and the subsequent transfer of glutamate onto a tRNA(Asp). Glutamate is transferred on the 2-amino-5-(4,5-dihydroxy-2-cyclopenten-1-yl) moiety of the queuosine in the wobble position of the QUC anticodon. This chain is Glutamyl-Q tRNA(Asp) synthetase, found in Janthinobacterium sp. (strain Marseille) (Minibacterium massiliensis).